A 155-amino-acid chain; its full sequence is DNA-directed RNA polymerase 1A (155 aa).

D88 is a catalytic residue.

The protein belongs to the phage and mitochondrial RNA polymerase family.

The enzyme catalyses RNA(n) + a ribonucleoside 5'-triphosphate = RNA(n+1) + diphosphate. In terms of biological role, DNA-dependent RNA polymerase catalyzes the transcription of DNA into RNA using the four ribonucleoside triphosphates as substrates. The sequence is that of DNA-directed RNA polymerase 1A (RPOT1-SYL) from Nicotiana tabacum (Common tobacco).